The primary structure comprises 450 residues: Protein phosphatase 1F (450 aa).

The 258-residue stretch at 152-409 folds into the PPM-type phosphatase domain; sequence LVSIHAIRNT…DNITVMVVFL (258 aa). Aspartate 194, glycine 195, aspartate 356, and aspartate 400 together coordinate Mn(2+). Positions 420 to 450 are disordered; sequence GQGAGGAQADVGSQDLSTGLSELEINTSQRS. The segment covering 433 to 450 has biased composition (polar residues); it reads QDLSTGLSELEINTSQRS. Phosphoserine is present on serine 450.

This sequence belongs to the PP2C family. As to quaternary structure, associates with FEM1B. It depends on Mg(2+) as a cofactor. Mn(2+) serves as cofactor.

The catalysed reaction is O-phospho-L-seryl-[protein] + H2O = L-seryl-[protein] + phosphate. It carries out the reaction O-phospho-L-threonyl-[protein] + H2O = L-threonyl-[protein] + phosphate. Its function is as follows. Dephosphorylates and concomitantly deactivates CaM-kinase II activated upon autophosphorylation, and CaM-kinases IV and I activated upon phosphorylation by CaM-kinase kinase. Promotes apoptosis. In Rattus norvegicus (Rat), this protein is Protein phosphatase 1F (Ppm1f).